Here is a 699-residue protein sequence, read N- to C-terminus: Polyribonucleotide nucleotidyltransferase (699 aa).

Residues D485 and D491 each coordinate Mg(2+). The KH domain maps to 552 to 611; the sequence is PRITTIKINPEKIRDVIGKGGAVIRALTEETGTTIELEDDGTVKIASNNGDATREAIRRI. In terms of domain architecture, S1 motif spans 621–689; it reads GRLYTGKVIR…RQGRVRLSIK (69 aa).

The protein belongs to the polyribonucleotide nucleotidyltransferase family. As to quaternary structure, component of the RNA degradosome, which is a multiprotein complex involved in RNA processing and mRNA degradation. Mg(2+) serves as cofactor.

The protein localises to the cytoplasm. The catalysed reaction is RNA(n+1) + phosphate = RNA(n) + a ribonucleoside 5'-diphosphate. Its function is as follows. Involved in mRNA degradation. Catalyzes the phosphorolysis of single-stranded polyribonucleotides processively in the 3'- to 5'-direction. The protein is Polyribonucleotide nucleotidyltransferase of Shewanella amazonensis (strain ATCC BAA-1098 / SB2B).